The primary structure comprises 61 residues: UPF0181 protein MS1074 (61 aa).

This sequence belongs to the UPF0181 family.

The sequence is that of UPF0181 protein MS1074 from Mannheimia succiniciproducens (strain KCTC 0769BP / MBEL55E).